We begin with the raw amino-acid sequence, 97 residues long: Large ribosomal subunit protein bL28 (97 aa).

This sequence belongs to the bacterial ribosomal protein bL28 family.

The protein is Large ribosomal subunit protein bL28 of Rickettsia felis (strain ATCC VR-1525 / URRWXCal2) (Rickettsia azadi).